The following is a 277-amino-acid chain: Putative thiosulfate sulfurtransferase (277 aa).

Rhodanese domains follow at residues 18-125 (DSAN…PLST) and 154-274 (SIKI…VPIE). Cys233 serves as the catalytic Cysteine persulfide intermediate. A substrate-binding site is contributed by Arg238.

The catalysed reaction is thiosulfate + hydrogen cyanide = thiocyanate + sulfite + 2 H(+). May be a sulfotransferase involved in the formation of thiosulfate. This chain is Putative thiosulfate sulfurtransferase (cysA), found in Mycobacterium leprae (strain TN).